The chain runs to 115 residues: U3-lycotoxin-Ls1a (115 aa).

The signal sequence occupies residues 1–20; that stretch reads MKFVLLFGVFLVTLFSYSSA. Residues 21-44 constitute a propeptide that is removed on maturation; the sequence is EMLDDFDQAAEDELLSLIEKEEAR. 4 disulfide bridges follow: Cys-48–Cys-63, Cys-55–Cys-72, Cys-62–Cys-87, and Cys-74–Cys-85.

This sequence belongs to the neurotoxin 19 (CSTX) family. 01 subfamily. Expressed by the venom gland.

It localises to the secreted. This Lycosa singoriensis (Wolf spider) protein is U3-lycotoxin-Ls1a.